A 178-amino-acid polypeptide reads, in one-letter code: ATP synthase subunit delta (178 aa).

Belongs to the ATPase delta chain family. F-type ATPases have 2 components, F(1) - the catalytic core - and F(0) - the membrane proton channel. F(1) has five subunits: alpha(3), beta(3), gamma(1), delta(1), epsilon(1). F(0) has three main subunits: a(1), b(2) and c(10-14). The alpha and beta chains form an alternating ring which encloses part of the gamma chain. F(1) is attached to F(0) by a central stalk formed by the gamma and epsilon chains, while a peripheral stalk is formed by the delta and b chains.

Its subcellular location is the cell membrane. Its function is as follows. F(1)F(0) ATP synthase produces ATP from ADP in the presence of a proton or sodium gradient. F-type ATPases consist of two structural domains, F(1) containing the extramembraneous catalytic core and F(0) containing the membrane proton channel, linked together by a central stalk and a peripheral stalk. During catalysis, ATP synthesis in the catalytic domain of F(1) is coupled via a rotary mechanism of the central stalk subunits to proton translocation. In terms of biological role, this protein is part of the stalk that links CF(0) to CF(1). It either transmits conformational changes from CF(0) to CF(1) or is implicated in proton conduction. In Streptococcus sanguinis (strain SK36), this protein is ATP synthase subunit delta.